The chain runs to 712 residues: Methionine--tRNA ligase (712 aa).

A 'HIGH' region motif is present at residues Pro-20–His-30. Cys-151, Cys-154, Cys-163, and Cys-167 together coordinate Zn(2+). The 'KMSKS' region motif lies at Lys-334–Thr-338. Position 337 (Lys-337) interacts with ATP. The segment at Ala-559–Ala-585 is disordered. The tRNA-binding domain maps to Asp-610–Arg-712.

Belongs to the class-I aminoacyl-tRNA synthetase family. MetG type 1 subfamily. Homodimer. Requires Zn(2+) as cofactor.

The protein resides in the cytoplasm. It catalyses the reaction tRNA(Met) + L-methionine + ATP = L-methionyl-tRNA(Met) + AMP + diphosphate. Its function is as follows. Is required not only for elongation of protein synthesis but also for the initiation of all mRNA translation through initiator tRNA(fMet) aminoacylation. The protein is Methionine--tRNA ligase of Methanosarcina acetivorans (strain ATCC 35395 / DSM 2834 / JCM 12185 / C2A).